The primary structure comprises 232 residues: 2-C-methyl-D-erythritol 4-phosphate cytidylyltransferase (232 aa).

It belongs to the IspD/TarI cytidylyltransferase family. IspD subfamily.

The catalysed reaction is 2-C-methyl-D-erythritol 4-phosphate + CTP + H(+) = 4-CDP-2-C-methyl-D-erythritol + diphosphate. It functions in the pathway isoprenoid biosynthesis; isopentenyl diphosphate biosynthesis via DXP pathway; isopentenyl diphosphate from 1-deoxy-D-xylulose 5-phosphate: step 2/6. Its function is as follows. Catalyzes the formation of 4-diphosphocytidyl-2-C-methyl-D-erythritol from CTP and 2-C-methyl-D-erythritol 4-phosphate (MEP). The chain is 2-C-methyl-D-erythritol 4-phosphate cytidylyltransferase from Rhodococcus erythropolis (strain PR4 / NBRC 100887).